Consider the following 585-residue polypeptide: Ankyrin repeat protein OPG003 (585 aa).

ANK repeat units lie at residues 66–98 (CGMS…NFDN), 172–220 (DGLT…NINA), 224–256 (IGNT…DTRI), 297–333 (EGHH…QKDE), and 336–365 (NTMT…DINL). Positions 554–571 (LPPEIIRNIITKLSDYHL) are PRANC/F-box-like.

This sequence belongs to the orthopoxvirus OPG003 family.

May be involved in virus-host protein interaction through the ankyrin repeats and PRANC regions. The sequence is that of Ankyrin repeat protein OPG003 (OPG003) from Homo sapiens (Human).